A 291-amino-acid polypeptide reads, in one-letter code: MLDNIKIGLQYCTPKHALTRLVGKLASLEAGKLTTAIIRWFIGQYKVDMSEARNPDPAAYSTFNHFFIRELKEGARPINNDDNIISHPADACVSQLGPIKEGRLFQAKGHYFDACELLGGDKALAEEFVDGDFATLYLSPRDYHRVHMPCDGTLRQMIYVPGDLFSVNPLTAQNVPNLFARNERVVCIFDTAHGPIAQVLVGATIVGSIETVWAGTVTPPTGPEVRRWDYPATGTQAIVLKKGQEMGRFKLGSTVINLFPKDMVRFVEAMKPEQPTRMGEPYAELDSSEKE.

Active-site charge relay system; for autoendoproteolytic cleavage activity residues include aspartate 90, histidine 147, and serine 253. Catalysis depends on serine 253, which acts as the Schiff-base intermediate with substrate; via pyruvic acid; for decarboxylase activity. At serine 253 the chain carries Pyruvic acid (Ser); by autocatalysis.

This sequence belongs to the phosphatidylserine decarboxylase family. PSD-B subfamily. Prokaryotic type I sub-subfamily. As to quaternary structure, heterodimer of a large membrane-associated beta subunit and a small pyruvoyl-containing alpha subunit. Pyruvate is required as a cofactor. Post-translationally, is synthesized initially as an inactive proenzyme. Formation of the active enzyme involves a self-maturation process in which the active site pyruvoyl group is generated from an internal serine residue via an autocatalytic post-translational modification. Two non-identical subunits are generated from the proenzyme in this reaction, and the pyruvate is formed at the N-terminus of the alpha chain, which is derived from the carboxyl end of the proenzyme. The autoendoproteolytic cleavage occurs by a canonical serine protease mechanism, in which the side chain hydroxyl group of the serine supplies its oxygen atom to form the C-terminus of the beta chain, while the remainder of the serine residue undergoes an oxidative deamination to produce ammonia and the pyruvoyl prosthetic group on the alpha chain. During this reaction, the Ser that is part of the protease active site of the proenzyme becomes the pyruvoyl prosthetic group, which constitutes an essential element of the active site of the mature decarboxylase.

It is found in the cell membrane. It catalyses the reaction a 1,2-diacyl-sn-glycero-3-phospho-L-serine + H(+) = a 1,2-diacyl-sn-glycero-3-phosphoethanolamine + CO2. It functions in the pathway phospholipid metabolism; phosphatidylethanolamine biosynthesis; phosphatidylethanolamine from CDP-diacylglycerol: step 2/2. Functionally, catalyzes the formation of phosphatidylethanolamine (PtdEtn) from phosphatidylserine (PtdSer). This is Phosphatidylserine decarboxylase proenzyme from Photobacterium profundum (strain SS9).